The following is a 96-amino-acid chain: Aspartyl/glutamyl-tRNA(Asn/Gln) amidotransferase subunit C (96 aa).

Belongs to the GatC family. As to quaternary structure, heterotrimer of A, B and C subunits.

The catalysed reaction is L-glutamyl-tRNA(Gln) + L-glutamine + ATP + H2O = L-glutaminyl-tRNA(Gln) + L-glutamate + ADP + phosphate + H(+). It carries out the reaction L-aspartyl-tRNA(Asn) + L-glutamine + ATP + H2O = L-asparaginyl-tRNA(Asn) + L-glutamate + ADP + phosphate + 2 H(+). In terms of biological role, allows the formation of correctly charged Asn-tRNA(Asn) or Gln-tRNA(Gln) through the transamidation of misacylated Asp-tRNA(Asn) or Glu-tRNA(Gln) in organisms which lack either or both of asparaginyl-tRNA or glutaminyl-tRNA synthetases. The reaction takes place in the presence of glutamine and ATP through an activated phospho-Asp-tRNA(Asn) or phospho-Glu-tRNA(Gln). The sequence is that of Aspartyl/glutamyl-tRNA(Asn/Gln) amidotransferase subunit C from Exiguobacterium sibiricum (strain DSM 17290 / CCUG 55495 / CIP 109462 / JCM 13490 / 255-15).